We begin with the raw amino-acid sequence, 501 residues long: LIM domain-containing protein HDR3 (501 aa).

Residues 33–67 (GEANRRRPRVTAGEETTLWEEPVRPKKEEPPRHNN) form a disordered region. The span at 53 to 67 (EPVRPKKEEPPRHNN) shows a compositional bias: basic and acidic residues. UIM domains lie at 65-84 (HNNE…DAKN) and 94-113 (ENDE…NPYQ). In terms of domain architecture, LIM zinc-binding spans 131–191 (RVCGGCKHEI…KLCYKELHHP (61 aa)). Positions 429–448 (YASSSSSSCRPPPSKKGGIS) are disordered.

As to quaternary structure, interacts (via N-terminus) with GW6A (via C-terminus).

Its function is as follows. Ubiquitin receptor that functions as a positive regulator of grain size and weight. Functions in the same genetic pathway as GW6A to regulate grain size. Modulates grain size in a similar manner to GW6A, by altering cell proliferation in spikelet hulls. Interacts with and enhances the ubiquitination of GW6A. This stabilizes GW6A, delays protein degradation by the 26S proteasome and enhances GW6A histone acetyltransferase activity. This Oryza sativa subsp. japonica (Rice) protein is LIM domain-containing protein HDR3.